Consider the following 426-residue polypeptide: Glutamyl-tRNA reductase (426 aa).

Substrate is bound by residues 49-52, Ser-107, 112-114, and Gln-118; these read TCNR and EPQ. The active-site Nucleophile is the Cys-50. 187 to 192 contacts NADP(+); the sequence is GAGETI.

Belongs to the glutamyl-tRNA reductase family. As to quaternary structure, homodimer.

It carries out the reaction (S)-4-amino-5-oxopentanoate + tRNA(Glu) + NADP(+) = L-glutamyl-tRNA(Glu) + NADPH + H(+). It participates in porphyrin-containing compound metabolism; protoporphyrin-IX biosynthesis; 5-aminolevulinate from L-glutamyl-tRNA(Glu): step 1/2. Catalyzes the NADPH-dependent reduction of glutamyl-tRNA(Glu) to glutamate 1-semialdehyde (GSA). The sequence is that of Glutamyl-tRNA reductase from Ectopseudomonas mendocina (strain ymp) (Pseudomonas mendocina).